A 421-amino-acid chain; its full sequence is Putative zinc finger protein R05D3.3 (421 aa).

2 C2H2-type zinc fingers span residues V207–H228 and Y234–H257. The segment at G400–V421 is disordered.

It localises to the nucleus. This Caenorhabditis elegans protein is Putative zinc finger protein R05D3.3.